The primary structure comprises 116 residues: UPF0102 protein LA_2381 (116 aa).

It belongs to the UPF0102 family.

The sequence is that of UPF0102 protein LA_2381 from Leptospira interrogans serogroup Icterohaemorrhagiae serovar Lai (strain 56601).